The chain runs to 420 residues: ATP phosphoribosyltransferase regulatory subunit (420 aa).

Belongs to the class-II aminoacyl-tRNA synthetase family. HisZ subfamily. As to quaternary structure, heteromultimer composed of HisG and HisZ subunits.

Its subcellular location is the cytoplasm. Its pathway is amino-acid biosynthesis; L-histidine biosynthesis; L-histidine from 5-phospho-alpha-D-ribose 1-diphosphate: step 1/9. Functionally, required for the first step of histidine biosynthesis. May allow the feedback regulation of ATP phosphoribosyltransferase activity by histidine. This is ATP phosphoribosyltransferase regulatory subunit from Bacillus thuringiensis subsp. konkukian (strain 97-27).